We begin with the raw amino-acid sequence, 60 residues long: Beta-defensin 11 (60 aa).

The N-terminal stretch at 1 to 22 (MRLHHLLLALLFLVLSAGSGIS) is a signal peptide. 3 disulfides stabilise this stretch: Cys27-Cys56, Cys34-Cys49, and Cys39-Cys57.

Belongs to the beta-defensin family. Neutrophilic granules.

Its subcellular location is the secreted. In terms of biological role, has bactericidal activity. Active against E.coli ML35 and S.aureus 502A. The polypeptide is Beta-defensin 11 (DEFB11) (Bos taurus (Bovine)).